A 421-amino-acid chain; its full sequence is Nacrein-like protein M (421 aa).

The N-linked (GlcNAc...) asparagine glycan is linked to asparagine 27. Positions 33 to 420 (AGFSYDRSIC…KNKVTVYKSF (388 aa)) constitute an Alpha-carbonic anhydrase domain. Zn(2+) contacts are provided by histidine 132, histidine 134, and histidine 157. The span at 197–206 (DGFGDEPDDE) shows a compositional bias: acidic residues. Residues 197–303 (DGFGDEPDDE…GENGHKHGCR (107 aa)) are disordered. A compositionally biased stretch (basic and acidic residues) spans 207–219 (ECKRILKGHHPDN). A compositionally biased stretch (low complexity) spans 220–295 (NENGNGDNGN…NNGDNGNNGE (76 aa)). A run of 24 repeats spans residues 225–227 (GDN), 228–230 (GNN), 231–233 (GYN), 234–236 (GDN), 237–239 (GNN), 240–242 (GDN), 243–245 (GNN), 246–248 (GYN), 249–251 (GDN), 252–254 (GNN), 255–257 (GDN), 258–260 (GNN), 261–263 (GYN), 264–266 (GDN), 267–269 (GNN), 270–272 (GDN), 273–275 (GNN), 276–278 (GEN), 279–281 (GNN), 282–284 (GEN), 285–287 (GNN), 288–290 (GDN), 291–292 (GN), and 294–296 (GEN). The interval 225–296 (GDNGNNGYNG…NGDNGNNGEN (72 aa)) is 24 X 3 AA approximate tandem repeats of G-X-N. 361–362 (TT) provides a ligand contact to substrate.

Belongs to the alpha-carbonic anhydrase family. As to quaternary structure, homooligomer; disulfide-linked. May also be disulfide-linked to insoluble organic matrix. Zn(2+) is required as a cofactor. In terms of tissue distribution, expressed in the mantle.

It is found in the secreted. Its subcellular location is the extracellular space. It localises to the extracellular matrix. The enzyme catalyses hydrogencarbonate + H(+) = CO2 + H2O. Acts as a negative regulator for calcification in the shells of mollusks. May function both as a calcium concentrator and as a carbonic anhydrase required for production of carbonate ions, which are assembled to CaCO(3) at mineralization sites. Is important for shell formation in both the calcitic prismatic layer and the aragonitic nacreous layerr. Shows inhibitory activity of crystal formation when present in free state but, when attached to the insoluble matrix, may regulate the form and size of aragonite crystal. The sequence is that of Nacrein-like protein M from Pinctada maxima (Silver-lipped pearl oyster).